We begin with the raw amino-acid sequence, 852 residues long: Probable LRR receptor-like serine/threonine-protein kinase At1g05700 (852 aa).

Residues 1-25 (MEEFRFLYLIYSAAFALCLVVSVLA) form the signal peptide. Residues 26–510 (QDQSGFISID…SCRKSNSKKL (485 aa)) are Extracellular-facing. 9 N-linked (GlcNAc...) asparagine glycosylation sites follow: Asn138, Asn182, Asn231, Asn240, Asn258, Asn293, Asn400, Asn415, and Asn431. 3 LRR repeats span residues 410–432 (RITS…FSNL), 434–457 (MIQE…SKLK), and 458–479 (FLRV…ELLE). Asn466 carries an N-linked (GlcNAc...) asparagine glycan. A helical transmembrane segment spans residues 511-531 (VIPLVASFAALFILLLLSGVF). Residues 532–852 (WRIRNRRNKS…LQREESNKNY (321 aa)) lie on the Cytoplasmic side of the membrane. A Phosphothreonine modification is found at Thr561. Residues 570 to 843 (NNFGQVLGKG…HIVRGLNECL (274 aa)) form the Protein kinase domain. ATP is bound by residues 576–584 (LGKGGFGTV) and Lys597. Tyr642 is modified (phosphotyrosine). The active-site Proton acceptor is Asp693. A phosphoserine mark is found at Ser697 and Ser727. 2 positions are modified to phosphothreonine: Thr728 and Thr733.

The protein belongs to the protein kinase superfamily. Ser/Thr protein kinase family.

It localises to the membrane. The enzyme catalyses L-seryl-[protein] + ATP = O-phospho-L-seryl-[protein] + ADP + H(+). It catalyses the reaction L-threonyl-[protein] + ATP = O-phospho-L-threonyl-[protein] + ADP + H(+). The sequence is that of Probable LRR receptor-like serine/threonine-protein kinase At1g05700 from Arabidopsis thaliana (Mouse-ear cress).